A 122-amino-acid chain; its full sequence is Small ribosomal subunit protein uS13 (122 aa).

Residues 99 to 122 (RGQRTHTNARTRKGPAKAIAGKKK) form a disordered region.

Belongs to the universal ribosomal protein uS13 family. In terms of assembly, part of the 30S ribosomal subunit. Forms a loose heterodimer with protein S19. Forms two bridges to the 50S subunit in the 70S ribosome.

Its function is as follows. Located at the top of the head of the 30S subunit, it contacts several helices of the 16S rRNA. In the 70S ribosome it contacts the 23S rRNA (bridge B1a) and protein L5 of the 50S subunit (bridge B1b), connecting the 2 subunits; these bridges are implicated in subunit movement. Contacts the tRNAs in the A and P-sites. The sequence is that of Small ribosomal subunit protein uS13 from Rhodopseudomonas palustris (strain TIE-1).